A 276-amino-acid chain; its full sequence is Undecaprenyl-diphosphatase (276 aa).

8 consecutive transmembrane segments (helical) span residues methionine 1 to valine 21, alanine 39 to phenylalanine 59, tyrosine 84 to leucine 104, leucine 115 to phenylalanine 135, leucine 159 to glycine 179, phenylalanine 190 to alanine 210, glutamine 222 to leucine 242, and phenylalanine 253 to valine 273.

Belongs to the UppP family.

The protein localises to the cell membrane. The catalysed reaction is di-trans,octa-cis-undecaprenyl diphosphate + H2O = di-trans,octa-cis-undecaprenyl phosphate + phosphate + H(+). Its function is as follows. Catalyzes the dephosphorylation of undecaprenyl diphosphate (UPP). Confers resistance to bacitracin. In Mycobacterium sp. (strain KMS), this protein is Undecaprenyl-diphosphatase.